We begin with the raw amino-acid sequence, 91 residues long: Small membrane A-kinase anchor protein (91 aa).

Gly-2 is lipidated: N-myristoyl glycine.

This sequence belongs to the small membrane AKAP family. May be palmitoylated at Cys-3.

Its subcellular location is the cell membrane. In terms of biological role, binds to type I regulatory subunits of protein kinase A and may anchor/target them to the plasma membrane. The protein is Small membrane A-kinase anchor protein of Xenopus laevis (African clawed frog).